Reading from the N-terminus, the 223-residue chain is Small ribosomal subunit protein uS3 (223 aa).

Residues 39–117 (IREFLRKKPS…RPELNAKLVA (79 aa)) enclose the KH type-2 domain.

This sequence belongs to the universal ribosomal protein uS3 family. As to quaternary structure, part of the 30S ribosomal subunit. Forms a tight complex with proteins S10 and S14.

Its function is as follows. Binds the lower part of the 30S subunit head. Binds mRNA in the 70S ribosome, positioning it for translation. This Chlamydia abortus (strain DSM 27085 / S26/3) (Chlamydophila abortus) protein is Small ribosomal subunit protein uS3.